A 387-amino-acid chain; its full sequence is Gamma-butyrobetaine dioxygenase (387 aa).

Zn(2+) is bound by residues Cys38, Cys40, Cys43, and His82. His202, Asp204, and His347 together coordinate Fe cation. At Ser351 the chain carries Phosphoserine.

This sequence belongs to the gamma-BBH/TMLD family. Fe(2+) serves as cofactor. Requires L-ascorbate as cofactor.

Its subcellular location is the cytoplasm. The catalysed reaction is 4-(trimethylamino)butanoate + 2-oxoglutarate + O2 = carnitine + succinate + CO2. Its pathway is amine and polyamine biosynthesis; carnitine biosynthesis. Functionally, catalyzes the formation of L-carnitine from gamma-butyrobetaine. The protein is Gamma-butyrobetaine dioxygenase (Bbox1) of Mus musculus (Mouse).